A 475-amino-acid chain; its full sequence is ESX-3 secretion system protein EccD3 (475 aa).

11 helical membrane-spanning segments follow: residues 132–152 (IARG…GLSV), 161–181 (LLGQ…ALAV), 186–206 (AVLA…AFAL), 212–232 (FGAP…LISM), 241–261 (IAVF…AGAA), 264–284 (WVIS…IVTV), 333–353 (GVIA…VSSA), 354–374 (NASP…ALRA), 384–404 (AWLL…FVIG), 409–429 (AALW…VAAL), and 453–473 (GLDA…SLVL).

It belongs to the EccD/Snm4 family. As to quaternary structure, part of the ESX-3 / type VII secretion system (T7SS), which is composed of cytosolic and membrane components. The ESX-3 membrane complex is composed of EccB3, EccC3, EccD3 and EccE3.

The protein localises to the cell inner membrane. Its function is as follows. Part of the ESX-3 specialized secretion system, which is required for siderophore-mediated iron acquisition and for the secretion of EsxH and EsxG. This Mycolicibacterium smegmatis (strain ATCC 700084 / mc(2)155) (Mycobacterium smegmatis) protein is ESX-3 secretion system protein EccD3.